The chain runs to 1128 residues: Nck-associated protein 1 (1128 aa).

Residue Ser-2 is modified to N-acetylserine. The tract at residues 640–665 (AVNKKSKKQTGKKGEPEREKPGVESM) is disordered. Residues 651–665 (KKGEPEREKPGVESM) are compositionally biased toward basic and acidic residues. The helical transmembrane segment at 995–1015 (IACLLMVFVAVSLPTLASNVM) threads the bilayer.

The protein belongs to the HEM-1/HEM-2 family. In terms of assembly, component of the WAVE1 complex composed of ABI2, CYFIP1 or CYFIP2, BRK1, NCKAP1 and WASF1/WAVE1. Within the complex, a heterodimer containing NCKAP1 and CYFIP1 interacts with a heterotrimer formed by WAVE1, ABI2 and BRK1. Component of the WAVE2 complex composed of ABI1, CYFIP1/SRA1, NCKAP1/NAP1 and WASF2/WAVE2. CYFIP2 binds to activated RAC1 which causes the complex to dissociate, releasing activated WASF1. The complex can also be activated by NCK1. Associates preferentially with the first SH3 domain of NCK. Interacts with NYAP1, NYAP2 and MYO16. Interacts with TMEM132D. (Microbial infection) Interacts with human cytomegalovirus protein UL135. Expressed in all tissues examined except peripheral blood leukocytes, with highest expression in brain, heart, and skeletal muscle. Expressed in cells of various brain regions including Purkinje cells and dentate nucleus of the cerebellum, CA4 region and dentate gyrus of the hippocampus, and in frontal gray and white matter.

It localises to the cell membrane. It is found in the cell projection. Its subcellular location is the lamellipodium membrane. Functionally, part of the WAVE complex that regulates lamellipodia formation. The WAVE complex regulates actin filament reorganization via its interaction with the Arp2/3 complex. Actin remodeling activity is regulated by RAC1. As component of the WAVE1 complex, required for BDNF-NTRK2 endocytic trafficking and signaling from early endosomes. The chain is Nck-associated protein 1 (NCKAP1) from Homo sapiens (Human).